We begin with the raw amino-acid sequence, 290 residues long: ATP synthase gamma chain (290 aa).

It belongs to the ATPase gamma chain family. As to quaternary structure, F-type ATPases have 2 components, CF(1) - the catalytic core - and CF(0) - the membrane proton channel. CF(1) has five subunits: alpha(3), beta(3), gamma(1), delta(1), epsilon(1). CF(0) has three main subunits: a, b and c.

It localises to the cell inner membrane. Functionally, produces ATP from ADP in the presence of a proton gradient across the membrane. The gamma chain is believed to be important in regulating ATPase activity and the flow of protons through the CF(0) complex. In Chelativorans sp. (strain BNC1), this protein is ATP synthase gamma chain.